Reading from the N-terminus, the 98-residue chain is Acylphosphatase (98 aa).

The region spanning 12 to 98 is the Acylphosphatase-like domain; it reads TYYVRVRGVV…ERRFERFQQQ (87 aa). Residues Arg-27 and Asn-45 contribute to the active site.

The protein belongs to the acylphosphatase family.

It catalyses the reaction an acyl phosphate + H2O = a carboxylate + phosphate + H(+). This is Acylphosphatase (acyP) from Burkholderia vietnamiensis (strain G4 / LMG 22486) (Burkholderia cepacia (strain R1808)).